A 640-amino-acid polypeptide reads, in one-letter code: RAP domain-containing protein, chloroplastic (640 aa).

Residues 1–32 constitute a chloroplast transit peptide; sequence MEAALLRPPPLAARGGVSIAIAFSVSRLPSAA. The segment at 111–158 is disordered; it reads SLQRMVASPKKKNKKKKSKKTNLKQKKAAEPKPPRDTDDDEDDEEEAD. Positions 119-136 are enriched in basic residues; it reads PKKKNKKKKSKKTNLKQK. Residues 137–146 are compositionally biased toward basic and acidic residues; sequence KAAEPKPPRD. Residues 147–158 show a composition bias toward acidic residues; it reads TDDDEDDEEEAD. The 59-residue stretch at 575–633 folds into the RAP domain; that stretch reads LAFEIDGPSHFSRNLGTPLGHTAFKRRYIAAAGWNLVSLSHQEWENLEGEFEQLEYLRR.

Expressed in roots, leaf sheaths, veins of leaf blade, mature leaves, endodermis of culm, panicles and anthers.

Its subcellular location is the plastid. It is found in the chloroplast. Functionally, probable RNA-binding protein that plays an essential role in chloroplast development. Regulates the ribosomal proteins homeostasis and ribosomal RNA development in chloroplasts. Involved the regulation of 16S rRNA and required for the expression of chloroplast-associated photosynthetic genes. The protein is RAP domain-containing protein, chloroplastic of Oryza sativa subsp. japonica (Rice).